The primary structure comprises 311 residues: 4-hydroxy-tetrahydrodipicolinate synthase (311 aa).

Threonine 51 serves as a coordination point for pyruvate. The active-site Proton donor/acceptor is tyrosine 140. Lysine 168 acts as the Schiff-base intermediate with substrate in catalysis. Residue isoleucine 209 participates in pyruvate binding.

This sequence belongs to the DapA family. In terms of assembly, homotetramer; dimer of dimers.

It is found in the cytoplasm. It catalyses the reaction L-aspartate 4-semialdehyde + pyruvate = (2S,4S)-4-hydroxy-2,3,4,5-tetrahydrodipicolinate + H2O + H(+). The protein operates within amino-acid biosynthesis; L-lysine biosynthesis via DAP pathway; (S)-tetrahydrodipicolinate from L-aspartate: step 3/4. In terms of biological role, catalyzes the condensation of (S)-aspartate-beta-semialdehyde [(S)-ASA] and pyruvate to 4-hydroxy-tetrahydrodipicolinate (HTPA). This Streptococcus pneumoniae (strain ATCC 700669 / Spain 23F-1) protein is 4-hydroxy-tetrahydrodipicolinate synthase.